The chain runs to 576 residues: Putative export ATP-binding/permease protein RP696 (576 aa).

An ABC transmembrane type-1 domain is found at 20–303; the sequence is LIIVMISLLS…IFELLSEMHL (284 aa). 6 helical membrane-spanning segments follow: residues 21–41, 61–81, 135–155, 158–178, 242–262, and 277–297; these read IIVMISLLSVSASLLLIGSIF, ILYICLLIVILSVASFFRSYF, FLSFFIRNSVMLIGSITLMFF, FKLASIVIITIPILLVPLIKF, ALFFAISIAVIFLTITLIVWI, and IISFIYYAIIAGVSSGGIFEL. In terms of domain architecture, ABC transporter spans 336–572; it reads IEFKNVDFTY…SEIYRNICRE (237 aa). 371–378 contributes to the ATP binding site; it reads GRSGAGKS.

This sequence belongs to the ABC transporter superfamily. As to quaternary structure, homodimer.

Its subcellular location is the cell inner membrane. Part of an ABC transporter complex. Transmembrane domains (TMD) form a pore in the inner membrane and the ATP-binding domain (NBD) is responsible for energy generation. The protein is Putative export ATP-binding/permease protein RP696 of Rickettsia prowazekii (strain Madrid E).